A 67-amino-acid chain; its full sequence is Large ribosomal subunit protein uL30 (67 aa).

It belongs to the universal ribosomal protein uL30 family. As to quaternary structure, part of the 50S ribosomal subunit.

The polypeptide is Large ribosomal subunit protein uL30 (Thermotoga maritima (strain ATCC 43589 / DSM 3109 / JCM 10099 / NBRC 100826 / MSB8)).